The following is a 343-amino-acid chain: N-acetyl-gamma-glutamyl-phosphate reductase (343 aa).

The active site involves Cys-149.

Belongs to the NAGSA dehydrogenase family. Type 1 subfamily.

The protein localises to the cytoplasm. The enzyme catalyses N-acetyl-L-glutamate 5-semialdehyde + phosphate + NADP(+) = N-acetyl-L-glutamyl 5-phosphate + NADPH + H(+). The protein operates within amino-acid biosynthesis; L-arginine biosynthesis; N(2)-acetyl-L-ornithine from L-glutamate: step 3/4. Functionally, catalyzes the NADPH-dependent reduction of N-acetyl-5-glutamyl phosphate to yield N-acetyl-L-glutamate 5-semialdehyde. This Alkalilimnicola ehrlichii (strain ATCC BAA-1101 / DSM 17681 / MLHE-1) protein is N-acetyl-gamma-glutamyl-phosphate reductase.